Reading from the N-terminus, the 337-residue chain is uncharacterized protein (337 aa).

The next 2 helical transmembrane spans lie at 4–24 (FIFFFKNYCYISGSMLLFSLI) and 26–46 (LLLWIISLYCVGLVFWILFVL).

The protein belongs to the plectrovirus ORF2 family.

It localises to the host membrane. This is an uncharacterized protein from Spiroplasma virus SpV1-R8A2 B (SpV1).